A 150-amino-acid chain; its full sequence is Large ribosomal subunit protein uL13 (150 aa).

It belongs to the universal ribosomal protein uL13 family. As to quaternary structure, part of the 50S ribosomal subunit.

Functionally, this protein is one of the early assembly proteins of the 50S ribosomal subunit, although it is not seen to bind rRNA by itself. It is important during the early stages of 50S assembly. This chain is Large ribosomal subunit protein uL13, found in Chlamydia muridarum (strain MoPn / Nigg).